The following is a 195-amino-acid chain: A-type ATP synthase subunit E (195 aa).

This sequence belongs to the V-ATPase E subunit family. In terms of assembly, has multiple subunits with at least A(3), B(3), C, D, E, F, H, I and proteolipid K(x).

The protein resides in the cell membrane. Its function is as follows. Component of the A-type ATP synthase that produces ATP from ADP in the presence of a proton gradient across the membrane. The polypeptide is A-type ATP synthase subunit E (Halobacterium salinarum (strain ATCC 29341 / DSM 671 / R1)).